The following is a 256-amino-acid chain: Indole-3-glycerol phosphate synthase (256 aa).

The protein belongs to the TrpC family.

The enzyme catalyses 1-(2-carboxyphenylamino)-1-deoxy-D-ribulose 5-phosphate + H(+) = (1S,2R)-1-C-(indol-3-yl)glycerol 3-phosphate + CO2 + H2O. It participates in amino-acid biosynthesis; L-tryptophan biosynthesis; L-tryptophan from chorismate: step 4/5. This chain is Indole-3-glycerol phosphate synthase, found in Pelodictyon phaeoclathratiforme (strain DSM 5477 / BU-1).